Reading from the N-terminus, the 104-residue chain is UPF0213 protein ORF82 (104 aa).

The 77-residue stretch at Lys-7–Leu-83 folds into the GIY-YIG domain.

Belongs to the UPF0213 family.

The polypeptide is UPF0213 protein ORF82 (Orgyia pseudotsugata (Douglas-fir tussock moth)).